The following is a 326-amino-acid chain: Chain length determinant protein (326 aa).

The Cytoplasmic portion of the chain corresponds to 1 to 31; the sequence is MRVENNNVSGQNHDPEQIDLIDLLVQLWRGK. A helical transmembrane segment spans residues 32–52; the sequence is MTIIISVIVAIALAIGYLAVA. The Periplasmic portion of the chain corresponds to 53 to 295; that stretch reads KEKWTSTAII…LPIRRDSPKK (243 aa). Residues 296 to 316 traverse the membrane as a helical segment; sequence AITLILAVLLGGMVGAGIVLG. Residues 317-326 lie on the Cytoplasmic side of the membrane; the sequence is RNALRNYNAK.

Belongs to the WzzB/Cld/Rol family. Homodimer.

Its subcellular location is the cell inner membrane. It participates in bacterial outer membrane biogenesis; lipopolysaccharide biosynthesis. In terms of biological role, confers a modal distribution of chain length on the O-antigen component of lipopolysaccharide (LPS). Gives rise to a reduced number of short chain molecules and increases in numbers of longer molecules. The sequence is that of Chain length determinant protein (wzzB) from Escherichia coli (strain K12).